Reading from the N-terminus, the 366-residue chain is Peptide chain release factor 2 (366 aa).

At Gln253 the chain carries N5-methylglutamine.

This sequence belongs to the prokaryotic/mitochondrial release factor family. Methylated by PrmC. Methylation increases the termination efficiency of RF2.

It localises to the cytoplasm. Peptide chain release factor 2 directs the termination of translation in response to the peptide chain termination codons UGA and UAA. The sequence is that of Peptide chain release factor 2 from Yersinia pestis.